We begin with the raw amino-acid sequence, 393 residues long: Elongation factor Tu (393 aa).

In terms of domain architecture, tr-type G spans 10–203 (KPHVNIGTIG…AVDEFIPEPV (194 aa)). The interval 19 to 26 (GHVDHGKT) is G1. 19 to 26 (GHVDHGKT) provides a ligand contact to GTP. Threonine 26 contributes to the Mg(2+) binding site. Positions 60–64 (GITIS) are G2. Positions 81–84 (DCPG) are G3. GTP-binding positions include 81-85 (DCPGH) and 136-139 (NKVD). The interval 136-139 (NKVD) is G4. The segment at 173–175 (SAL) is G5.

This sequence belongs to the TRAFAC class translation factor GTPase superfamily. Classic translation factor GTPase family. EF-Tu/EF-1A subfamily. Monomer.

It is found in the cytoplasm. The enzyme catalyses GTP + H2O = GDP + phosphate + H(+). Functionally, GTP hydrolase that promotes the GTP-dependent binding of aminoacyl-tRNA to the A-site of ribosomes during protein biosynthesis. This chain is Elongation factor Tu, found in Chlorobium limicola (strain DSM 245 / NBRC 103803 / 6330).